A 176-amino-acid polypeptide reads, in one-letter code: MSDSRLLPTGSSPLEVAAAKACAEIEKTPVSIRELWNPDTCPANLLPWLAWAFSVDRWDEKWPEATKRAVIRDAYFIHCHKGTIGAIRRVVEPLGYLINVTEWWENSDPPGTFRLDIGVLESGITEAMYQEMERLIADAKPASRHLIGLNITRDIPGYLFAGGVAYDGDVITVYPG.

It belongs to the P2likevirus gpI protein family.

The protein localises to the virion. Functionally, baseplate protein that may be part of the wedges of the baseplate. Plays a role in tail assembly. The chain is Baseplate protein I (I) from Escherichia phage P2 (Bacteriophage P2).